A 1348-amino-acid chain; its full sequence is Phosphoribosylformylglycinamidine synthase (1348 aa).

ATP contacts are provided by residues 300 to 311 and Ala-701; that span reads GAATGAGGEIRD. Residues Asp-702, Glu-741, Asn-745, and Asp-941 each coordinate Mg(2+). Ser-943 is an ATP binding site. In terms of domain architecture, Glutamine amidotransferase type-1 spans 1099–1348; it reads VAILREQGVN…MFRNARVWCG (250 aa). Cys-1192 (nucleophile) is an active-site residue. Residues His-1313 and Glu-1315 contribute to the active site.

In the N-terminal section; belongs to the FGAMS family. In terms of assembly, monomer.

Its subcellular location is the cytoplasm. It catalyses the reaction N(2)-formyl-N(1)-(5-phospho-beta-D-ribosyl)glycinamide + L-glutamine + ATP + H2O = 2-formamido-N(1)-(5-O-phospho-beta-D-ribosyl)acetamidine + L-glutamate + ADP + phosphate + H(+). The protein operates within purine metabolism; IMP biosynthesis via de novo pathway; 5-amino-1-(5-phospho-D-ribosyl)imidazole from N(2)-formyl-N(1)-(5-phospho-D-ribosyl)glycinamide: step 1/2. Functionally, phosphoribosylformylglycinamidine synthase involved in the purines biosynthetic pathway. Catalyzes the ATP-dependent conversion of formylglycinamide ribonucleotide (FGAR) and glutamine to yield formylglycinamidine ribonucleotide (FGAM) and glutamate. In Xanthomonas campestris pv. campestris (strain ATCC 33913 / DSM 3586 / NCPPB 528 / LMG 568 / P 25), this protein is Phosphoribosylformylglycinamidine synthase.